Reading from the N-terminus, the 647-residue chain is Exoribonuclease 2 (647 aa).

The RNB domain maps to 192–519; the sequence is RIDLTSLDFV…NHRLLKAIIQ (328 aa). The 83-residue stretch at 564–646 folds into the S1 motif domain; sequence EQRFTAEIID…ETRNIVARPT (83 aa).

The protein belongs to the RNR ribonuclease family. RNase II subfamily.

It localises to the cytoplasm. It catalyses the reaction Exonucleolytic cleavage in the 3'- to 5'-direction to yield nucleoside 5'-phosphates.. Functionally, involved in mRNA degradation. Hydrolyzes single-stranded polyribonucleotides processively in the 3' to 5' direction. This chain is Exoribonuclease 2, found in Photorhabdus laumondii subsp. laumondii (strain DSM 15139 / CIP 105565 / TT01) (Photorhabdus luminescens subsp. laumondii).